The chain runs to 108 residues: Parvalbumin beta (108 aa).

2 EF-hand domains span residues 38–73 (KPTD…FCSS) and 77–108 (LSNA…LVRS). Residues D51, D53, S55, Y57, E59, E62, D90, D92, D94, K96, and E101 each coordinate Ca(2+).

Belongs to the parvalbumin family.

Functionally, in muscle, parvalbumin is thought to be involved in relaxation after contraction. It binds two calcium ions. The protein is Parvalbumin beta of Amphiuma means (Salamander).